The following is a 115-amino-acid chain: Ribonuclease P protein component (115 aa).

It belongs to the RnpA family. Consists of a catalytic RNA component (M1 or rnpB) and a protein subunit.

It catalyses the reaction Endonucleolytic cleavage of RNA, removing 5'-extranucleotides from tRNA precursor.. Its function is as follows. RNaseP catalyzes the removal of the 5'-leader sequence from pre-tRNA to produce the mature 5'-terminus. It can also cleave other RNA substrates such as 4.5S RNA. The protein component plays an auxiliary but essential role in vivo by binding to the 5'-leader sequence and broadening the substrate specificity of the ribozyme. This Bacillus cereus (strain ATCC 10987 / NRS 248) protein is Ribonuclease P protein component.